The sequence spans 430 residues: Adenylosuccinate synthetase (430 aa).

Residues 13–19 (GDEGKGK) and 41–43 (GHT) contribute to the GTP site. Asp-14 functions as the Proton acceptor in the catalytic mechanism. Residues Asp-14 and Gly-41 each coordinate Mg(2+). IMP contacts are provided by residues 14–17 (DEGK), 39–42 (NAGH), Thr-130, Arg-144, Gln-225, Thr-240, and Arg-304. His-42 functions as the Proton donor in the catalytic mechanism. 300-306 (STTGRAR) contacts substrate. Residues Arg-306, 332-334 (KLD), and 414-416 (STG) contribute to the GTP site.

This sequence belongs to the adenylosuccinate synthetase family. Homodimer. Requires Mg(2+) as cofactor.

The protein localises to the cytoplasm. It catalyses the reaction IMP + L-aspartate + GTP = N(6)-(1,2-dicarboxyethyl)-AMP + GDP + phosphate + 2 H(+). The protein operates within purine metabolism; AMP biosynthesis via de novo pathway; AMP from IMP: step 1/2. In terms of biological role, plays an important role in the de novo pathway of purine nucleotide biosynthesis. Catalyzes the first committed step in the biosynthesis of AMP from IMP. The protein is Adenylosuccinate synthetase of Pseudomonas putida (strain W619).